Consider the following 665-residue polypeptide: Succinate dehydrogenase [ubiquinone] flavoprotein subunit B, mitochondrial (665 aa).

A mitochondrion-targeting transit peptide spans 1 to 45 (MALLKVAPSRLLSRALQLTSTLQNCTATSIAARRNFHFTVYGRKD). Residues Ala72, Ala75, Thr94, Lys95, and Ser101 each contribute to the FAD site. His102 is subject to Tele-8alpha-FAD histidine. 4 residues coordinate FAD: Thr103, Gly108, Ala224, and Asp278. His299, Arg343, and His410 together coordinate oxaloacetate. Arg343 serves as the catalytic Proton acceptor. Glu443 is an FAD binding site. 2 residues coordinate oxaloacetate: Arg454 and Ala457. FAD is bound by residues Ser459 and Leu460.

The protein belongs to the FAD-dependent oxidoreductase 2 family. FRD/SDH subfamily. As to quaternary structure, component of complex II composed of four subunits: a flavoprotein (FP), an iron-sulfur protein (IP), and a cytochrome b composed of a large and a small subunit. FAD is required as a cofactor.

It localises to the mitochondrion inner membrane. It carries out the reaction a ubiquinone + succinate = a ubiquinol + fumarate. The enzyme catalyses (R)-malate + a quinone = enol-oxaloacetate + a quinol. It catalyses the reaction (S)-malate + a quinone = enol-oxaloacetate + a quinol. It participates in carbohydrate metabolism; tricarboxylic acid cycle; fumarate from succinate (eukaryal route): step 1/1. Enol-oxaloacetate inhibits the succinate dehydrogenase activity. Flavoprotein (FP) subunit of succinate dehydrogenase (SDH) that is involved in complex II of the mitochondrial electron transport chain and is responsible for transferring electrons from succinate to ubiquinone (coenzyme Q). SDH also oxidizes malate to the non-canonical enol form of oxaloacetate, enol-oxaloacetate. Enol-oxaloacetate, which is a potent inhibitor of the succinate dehydrogenase activity, is further isomerized into keto-oxaloacetate. The protein is Succinate dehydrogenase [ubiquinone] flavoprotein subunit B, mitochondrial (sdha-b) of Xenopus laevis (African clawed frog).